Reading from the N-terminus, the 129-residue chain is UPF0325 protein YPTS_3127 (129 aa).

Belongs to the UPF0325 family.

The chain is UPF0325 protein YPTS_3127 from Yersinia pseudotuberculosis serotype IB (strain PB1/+).